The following is an 861-amino-acid chain: DNA mismatch repair protein MutS (861 aa).

609–616 (GPNMAGKS) lines the ATP pocket.

It belongs to the DNA mismatch repair MutS family.

This protein is involved in the repair of mismatches in DNA. It is possible that it carries out the mismatch recognition step. This protein has a weak ATPase activity. This chain is DNA mismatch repair protein MutS, found in Borrelia hermsii (strain HS1 / DAH).